The sequence spans 90 residues: Small ribosomal subunit protein uS15 (90 aa).

It belongs to the universal ribosomal protein uS15 family. Part of the 30S ribosomal subunit. Forms a bridge to the 50S subunit in the 70S ribosome, contacting the 23S rRNA.

Functionally, one of the primary rRNA binding proteins, it binds directly to 16S rRNA where it helps nucleate assembly of the platform of the 30S subunit by binding and bridging several RNA helices of the 16S rRNA. Forms an intersubunit bridge (bridge B4) with the 23S rRNA of the 50S subunit in the ribosome. The sequence is that of Small ribosomal subunit protein uS15 from Campylobacter jejuni subsp. jejuni serotype O:6 (strain 81116 / NCTC 11828).